Reading from the N-terminus, the 271-residue chain is Structure-specific endonuclease subunit SLX1 (271 aa).

Residues 9-94 (RFFGVYLLYC…PQASRRLTHV (86 aa)) form the GIY-YIG domain. The segment at 182-234 (CTLCARMLQDEEGPLCCPHPGCPLRAHIICLAEEFLQEEPGQLLPLEGHCPSC) adopts an SLX1-type zinc-finger fold.

The protein belongs to the SLX1 family. In terms of assembly, forms a heterodimer with SLX4. Requires a divalent metal cation as cofactor.

It is found in the nucleus. Functionally, catalytic subunit of the SLX1-SLX4 structure-specific endonuclease that resolves DNA secondary structures generated during DNA repair and recombination. Has endonuclease activity towards branched DNA substrates, introducing single-strand cuts in duplex DNA close to junctions with ss-DNA. Has a preference for 5'-flap structures, and promotes symmetrical cleavage of static and migrating Holliday junctions (HJs). Resolves HJs by generating two pairs of ligatable, nicked duplex products. In Rattus norvegicus (Rat), this protein is Structure-specific endonuclease subunit SLX1 (Slx1b).